The sequence spans 513 residues: Protein phosphatase 1H (513 aa).

Ser7 bears the Phosphoserine mark. Positions 77–506 (ATGYAEVINA…DDISVYVIPL (430 aa)) constitute a PPM-type phosphatase domain. The interval 110–133 (ITSTPNRNSKRRSSLPNGEGLQLK) is disordered. Phosphothreonine is present on Thr113. Ser123 and Ser210 each carry phosphoserine. Arg212 carries the post-translational modification Omega-N-methylarginine. Ser220 carries the post-translational modification Phosphoserine. Thr223 bears the Phosphothreonine mark. Ser421 bears the Phosphoserine mark.

It belongs to the PP2C family.

It localises to the nucleus. Its subcellular location is the cytoplasm. It catalyses the reaction O-phospho-L-seryl-[protein] + H2O = L-seryl-[protein] + phosphate. The catalysed reaction is O-phospho-L-threonyl-[protein] + H2O = L-threonyl-[protein] + phosphate. Functionally, dephosphorylates CDKN1B at 'Thr-187', thus removing a signal for proteasomal degradation. This chain is Protein phosphatase 1H (Ppm1h), found in Rattus norvegicus (Rat).